Consider the following 535-residue polypeptide: Beta-glucosidase 47 (535 aa).

Positions Met1 to Ser38 are cleaved as a signal peptide. Residue Gln73 coordinates a beta-D-glucoside. An N-linked (GlcNAc...) asparagine glycan is attached at Asn93. A beta-D-glucoside contacts are provided by residues His175 and Asn220–Glu221. The active-site Proton donor is the Glu221. Cys240 and Cys247 form a disulfide bridge. Asn246 carries an N-linked (GlcNAc...) asparagine glycan. Residue Tyr363 participates in a beta-D-glucoside binding. A disulfide bridge connects residues Cys371 and Cys376. Residue Asn419 is glycosylated (N-linked (GlcNAc...) asparagine). Glu426 contacts a beta-D-glucoside. The active-site Nucleophile is the Glu426. A glycan (N-linked (GlcNAc...) asparagine) is linked at Asn432. A beta-D-glucoside-binding positions include Trp470, Glu477–Trp478, and Phe486.

It belongs to the glycosyl hydrolase 1 family.

The catalysed reaction is Hydrolysis of terminal, non-reducing beta-D-glucosyl residues with release of beta-D-glucose.. This Arabidopsis thaliana (Mouse-ear cress) protein is Beta-glucosidase 47.